The chain runs to 366 residues: NAD(P)H-quinone oxidoreductase subunit 1, chloroplastic (366 aa).

A run of 7 helical transmembrane segments spans residues 28-48 (IWLL…VLVI), 105-125 (IAVI…HLVL), 128-148 (LSIG…GLLM), 250-270 (SGIK…VSSL), 271-291 (FVTV…FIFI), 303-323 (IFGM…FLFI), and 346-366 (FLLP…LLSL).

It belongs to the complex I subunit 1 family. As to quaternary structure, NDH is composed of at least 16 different subunits, 5 of which are encoded in the nucleus.

It is found in the plastid. Its subcellular location is the chloroplast thylakoid membrane. It catalyses the reaction a plastoquinone + NADH + (n+1) H(+)(in) = a plastoquinol + NAD(+) + n H(+)(out). The enzyme catalyses a plastoquinone + NADPH + (n+1) H(+)(in) = a plastoquinol + NADP(+) + n H(+)(out). In terms of biological role, NDH shuttles electrons from NAD(P)H:plastoquinone, via FMN and iron-sulfur (Fe-S) centers, to quinones in the photosynthetic chain and possibly in a chloroplast respiratory chain. The immediate electron acceptor for the enzyme in this species is believed to be plastoquinone. Couples the redox reaction to proton translocation, and thus conserves the redox energy in a proton gradient. In Nandina domestica (Heavenly bamboo), this protein is NAD(P)H-quinone oxidoreductase subunit 1, chloroplastic.